The primary structure comprises 671 residues: uncharacterized protein (671 aa).

The chain crosses the membrane as a helical span at residues 39-56; it reads ATVTVVILLLILLLGWGY.

The protein localises to the membrane. This is an uncharacterized protein from Treponema pallidum (strain Nichols).